Consider the following 257-residue polypeptide: Acetylglutamate kinase (257 aa).

Residues 43 to 44 (GG), Arg-65, and Asn-157 each bind substrate. ATP is bound by residues 180–185 (DVSGIL) and 208–210 (IIT).

It belongs to the acetylglutamate kinase family. ArgB subfamily. Homodimer.

Its subcellular location is the cytoplasm. It carries out the reaction N-acetyl-L-glutamate + ATP = N-acetyl-L-glutamyl 5-phosphate + ADP. It functions in the pathway amino-acid biosynthesis; L-arginine biosynthesis; N(2)-acetyl-L-ornithine from L-glutamate: step 2/4. Functionally, catalyzes the ATP-dependent phosphorylation of N-acetyl-L-glutamate. The chain is Acetylglutamate kinase from Escherichia coli O139:H28 (strain E24377A / ETEC).